Here is a 167-residue protein sequence, read N- to C-terminus: uncharacterized protein (167 aa).

The signal sequence occupies residues 1–25; it reads MPFSVTKFSLIFVALLLAEALVAQS.

This is an uncharacterized protein from Caenorhabditis elegans.